Reading from the N-terminus, the 324-residue chain is Acetyl-coenzyme A carboxylase carboxyl transferase subunit alpha (324 aa).

The 255-residue stretch at arginine 44–isoleucine 298 folds into the CoA carboxyltransferase C-terminal domain.

This sequence belongs to the AccA family. As to quaternary structure, acetyl-CoA carboxylase is a heterohexamer composed of biotin carboxyl carrier protein (accB), biotin carboxylase (accC) and two subunits each of ACCase subunit alpha (accA) and ACCase subunit beta (accD).

It localises to the plastid. Its subcellular location is the chloroplast. It carries out the reaction N(6)-carboxybiotinyl-L-lysyl-[protein] + acetyl-CoA = N(6)-biotinyl-L-lysyl-[protein] + malonyl-CoA. It functions in the pathway lipid metabolism; malonyl-CoA biosynthesis; malonyl-CoA from acetyl-CoA: step 1/1. In terms of biological role, component of the acetyl coenzyme A carboxylase (ACC) complex. First, biotin carboxylase catalyzes the carboxylation of biotin on its carrier protein (BCCP) and then the CO(2) group is transferred by the carboxyltransferase to acetyl-CoA to form malonyl-CoA. This Porphyra purpurea (Red seaweed) protein is Acetyl-coenzyme A carboxylase carboxyl transferase subunit alpha.